A 393-amino-acid chain; its full sequence is MKIVIVGIGYVGLANAILFSKNNENEVVLLDIDENKIQSINNHKSPIKDKLIEKFFVQNISKLHATSNIKEAYFNADFAVIATPTDYDEQLNFFDTRSIENVLKDIKNINSKINVIIKSTVPIGYTKTIKQKFNMSNIVFSPEFLREGSALYDSLYPSRIIIGDKSVLGKTIGDLFLKNIEKKNVDIFYMDSDEAESVKLFSNTYLAMRVGFFNEVDSYARKHNLNSADIIKGISADDRIGKYYNNPSFGYGGYCLPKDTKQLLANFYNIPNSLIKAIVETNEIRKKFITQLILEKKPNILGIYRLIMKQNSDNFRNSVIIDIIKYLQEYNSNIELIIYEPLVKEKKFLNIKVENDFNVFGAKVDLIIANRFDDKLKEIKDKVFSADVFYTDI.

Val-11, Asp-31, Lys-36, Thr-85, Thr-120, and Glu-147 together coordinate NAD(+). Substrate-binding positions include 143–147 (EFLRE), Lys-199, Asn-203, 244–248 (YNNPS), and Gly-252. Tyr-254 lines the NAD(+) pocket. Catalysis depends on Cys-255, which acts as the Nucleophile. Lys-258 contributes to the NAD(+) binding site. Residue Lys-309 coordinates substrate. Arg-316 contributes to the NAD(+) binding site.

This sequence belongs to the UDP-glucose/GDP-mannose dehydrogenase family. In terms of assembly, homodimer.

The enzyme catalyses UDP-alpha-D-glucose + 2 NAD(+) + H2O = UDP-alpha-D-glucuronate + 2 NADH + 3 H(+). It participates in nucleotide-sugar biosynthesis; UDP-alpha-D-glucuronate biosynthesis; UDP-alpha-D-glucuronate from UDP-alpha-D-glucose: step 1/1. The protein operates within capsule biogenesis; capsule polysaccharide biosynthesis. In terms of biological role, catalyzes the formation of UDP-glucuronic acid which is required for capsular polysaccharide synthesis. Does not catalyze the formation of glucuronamide moiety of the capsular polysaccharide. The protein is UDP-glucose 6-dehydrogenase of Campylobacter jejuni subsp. jejuni serotype O:2 (strain ATCC 700819 / NCTC 11168).